We begin with the raw amino-acid sequence, 245 residues long: Ubiquinone biosynthesis O-methyltransferase (245 aa).

Positions 49, 69, 90, and 134 each coordinate S-adenosyl-L-methionine.

It belongs to the methyltransferase superfamily. UbiG/COQ3 family.

It carries out the reaction a 3-demethylubiquinol + S-adenosyl-L-methionine = a ubiquinol + S-adenosyl-L-homocysteine + H(+). The catalysed reaction is a 3-(all-trans-polyprenyl)benzene-1,2-diol + S-adenosyl-L-methionine = a 2-methoxy-6-(all-trans-polyprenyl)phenol + S-adenosyl-L-homocysteine + H(+). It participates in cofactor biosynthesis; ubiquinone biosynthesis. Functionally, O-methyltransferase that catalyzes the 2 O-methylation steps in the ubiquinone biosynthetic pathway. This Vibrio cholerae serotype O1 (strain ATCC 39541 / Classical Ogawa 395 / O395) protein is Ubiquinone biosynthesis O-methyltransferase.